The primary structure comprises 437 residues: Trigger factor (437 aa).

The 86-residue stretch at 161 to 246 folds into the PPIase FKBP-type domain; it reads DDQVNIDFVG…VNSVSAPVLP (86 aa).

This sequence belongs to the FKBP-type PPIase family. Tig subfamily.

The protein resides in the cytoplasm. The catalysed reaction is [protein]-peptidylproline (omega=180) = [protein]-peptidylproline (omega=0). Its function is as follows. Involved in protein export. Acts as a chaperone by maintaining the newly synthesized protein in an open conformation. Functions as a peptidyl-prolyl cis-trans isomerase. The sequence is that of Trigger factor from Pseudomonas putida (strain ATCC 700007 / DSM 6899 / JCM 31910 / BCRC 17059 / LMG 24140 / F1).